The following is an 867-amino-acid chain: Cation/H(+) antiporter 23, chloroplastic (867 aa).

12 helical membrane passes run 43–63, 75–95, 112–132, 146–166, 175–195, 212–232, 242–262, 283–303, 336–356, 362–382, 393–413, and 427–447; these read SGSTLASSLPFFITQLFVANL, LYLPPFVAQILCGLLFSPSVL, MVLETFANLALVYNIFLLGLG, VIIAFTGLLVALPVGAFLYYL, IISGCVFWSVALACTNFPDLA, AMCAAIVTDLCTWVLLVFGFA, KMMPFVIITTAIFVLLCIFVI, HVWFILGGVVLCGLITDACGV, GILMPLFYIICGLRADIGFML, FMMVVVICSSFLVKIVTTVIT, AFAIGALMNTKGTLSLVVLNA, and HMTIALLVMSLVVEPLLAFAY. A disordered region spans residues 848–867; that stretch reads SMYEDEDEDDEEDHQYGIHR. A compositionally biased stretch (acidic residues) spans 851–860; it reads EDEDEDDEED.

The protein belongs to the monovalent cation:proton antiporter 2 (CPA2) transporter (TC 2.A.37) family. CHX (TC 2.A.37.4) subfamily. In terms of tissue distribution, specifically expressed in flower buds and pollen. Expressed in leaves, roots and stems.

It is found in the plastid. The protein localises to the chloroplast membrane. It localises to the endoplasmic reticulum membrane. Operates as a K(+)/H(+) antiporter or Na(+)/H(+) antiporter of the chloroplast envelope that functions in pH homeostasis and chloroplast development. Monovalent cation transporter with a preference for Cs(+), K(+) and Rb(+) relative to Na(+) or Li(+). Required for pollen tube guidance, but not for normal pollen development. May also be involved in the development or function of the female gametophyte. The polypeptide is Cation/H(+) antiporter 23, chloroplastic (CHX23) (Arabidopsis thaliana (Mouse-ear cress)).